Here is a 209-residue protein sequence, read N- to C-terminus: Phosphoheptose isomerase (209 aa).

The 160-residue stretch at 50 to 209 (IAETFRNGGK…ELVESMMGYA (160 aa)) folds into the SIS domain. 65-67 (NGG) is a binding site for substrate. The Zn(2+) site is built by His-74 and Glu-78. Substrate contacts are provided by residues Glu-78, 109-110 (ND), 135-137 (STS), Ser-140, and Gln-188. Zn(2+)-binding residues include Gln-188 and His-196.

The protein belongs to the SIS family. GmhA subfamily. Zn(2+) serves as cofactor.

It localises to the cytoplasm. The catalysed reaction is 2 D-sedoheptulose 7-phosphate = D-glycero-alpha-D-manno-heptose 7-phosphate + D-glycero-beta-D-manno-heptose 7-phosphate. Its pathway is carbohydrate biosynthesis; D-glycero-D-manno-heptose 7-phosphate biosynthesis; D-glycero-alpha-D-manno-heptose 7-phosphate and D-glycero-beta-D-manno-heptose 7-phosphate from sedoheptulose 7-phosphate: step 1/1. Its function is as follows. Catalyzes the isomerization of sedoheptulose 7-phosphate in D-glycero-D-manno-heptose 7-phosphate. The protein is Phosphoheptose isomerase of Chlorobaculum parvum (strain DSM 263 / NCIMB 8327) (Chlorobium vibrioforme subsp. thiosulfatophilum).